Consider the following 608-residue polypeptide: RAS guanyl-releasing protein 2 (608 aa).

Residues Thr-4–Thr-126 enclose the N-terminal Ras-GEF domain. Phosphoserine occurs at positions 116, 117, and 147. The Ras-GEF domain maps to Glu-154 to Arg-387. Residues Leu-382–Pro-405 are disordered. 2 consecutive EF-hand domains span residues His-426–Leu-461 and Ala-463–Val-490. Ca(2+)-binding residues include Asp-439, Asp-441, Asp-443, His-445, Glu-450, Asp-468, Asn-470, Asp-472, Cys-474, and Glu-479. Residues Val-498 to Cys-548 form a Phorbol-ester/DAG-type zinc finger. Phosphoserine occurs at positions 554 and 575. The segment at Val-555 to Val-596 is disordered.

Belongs to the RASGRP family. As to quaternary structure, forms a signaling complex with RAP1 and BRAF. Interacts with F-actin. Interacts with RAP1. In terms of tissue distribution, detected in megakaryocytes, platelet and neutrophils but not in lymphocytes (at protein level). Isoform 1 and isoform 3 are detected in brain basal glanglia, heart, lung, spleen, liver and kidney interstitial cells.

It is found in the cytoplasm. It localises to the cytosol. The protein resides in the cell membrane. The protein localises to the synapse. Its subcellular location is the synaptosome. It is found in the cell projection. It localises to the ruffle membrane. Its function is as follows. Functions as a calcium- and DAG-regulated nucleotide exchange factor specifically activating Rap through the exchange of bound GDP for GTP. May also activate other GTPases such as RRAS, RRAS2, NRAS, KRAS but not HRAS. Functions in aggregation of platelets and adhesion of T-lymphocytes and neutrophils probably through inside-out integrin activation. May function in the muscarinic acetylcholine receptor M1/CHRM1 signaling pathway. The chain is RAS guanyl-releasing protein 2 (Rasgrp2) from Mus musculus (Mouse).